Here is a 161-residue protein sequence, read N- to C-terminus: Dihydrofolate reductase (161 aa).

In terms of domain architecture, DHFR spans 2 to 161; the sequence is NISLIAAISK…YNYSFEILSR (160 aa). 6–8 lines the substrate pocket; sequence IAA. NADP(+) contacts are provided by residues 7-8 and 15-20; these read AA and IGYKNK. Asp-28 serves as a coordination point for substrate. 44 to 47 provides a ligand contact to NADP(+); that stretch reads GRLT. A substrate-binding site is contributed by Arg-59. Residues 64–66 and 96–101 each bind NADP(+); these read ISS and IGGAKI. Thr-115 is a substrate binding site.

This sequence belongs to the dihydrofolate reductase family.

The enzyme catalyses (6S)-5,6,7,8-tetrahydrofolate + NADP(+) = 7,8-dihydrofolate + NADPH + H(+). Its pathway is cofactor biosynthesis; tetrahydrofolate biosynthesis; 5,6,7,8-tetrahydrofolate from 7,8-dihydrofolate: step 1/1. Key enzyme in folate metabolism. Catalyzes an essential reaction for de novo glycine and purine synthesis, and for DNA precursor synthesis. This chain is Dihydrofolate reductase (folA), found in Buchnera aphidicola subsp. Acyrthosiphon pisum (strain APS) (Acyrthosiphon pisum symbiotic bacterium).